Here is a 688-residue protein sequence, read N- to C-terminus: Envelope glycoprotein gp70 (688 aa).

Over residues 1–15 (MPNHQSGSPTGSSDL) the composition is skewed to polar residues. The disordered stretch occupies residues 1–31 (MPNHQSGSPTGSSDLLLSGKKQRPHLALRRK). The N-terminal stretch at 1 to 98 (MPNHQSGSPT…SVLGPPPVTG (98 aa)) is a signal peptide. Residues 20–31 (KKQRPHLALRRK) are compositionally biased toward basic residues. Over 99–624 (ESYWAYLPKP…ALNPLDWTQY (526 aa)) the chain is Extracellular. 2 N-linked (GlcNAc...) asparagine; by host glycosylation sites follow: asparagine 127 and asparagine 143. Residues 426–474 (LLPVDIGDEPWFDDSAIQTFRYATDLIRAKRFVAAIILGISALIAIITS) adopt a coiled-coil conformation. A propeptide spanning residues 455 to 456 (KR) is cleaved from the precursor. The fusion peptide stretch occupies residues 457 to 477 (FVAAIILGISALIAIITSFAV). The immunosuppression stretch occupies residues 463 to 481 (LGISALIAIITSFAVATTA). N-linked (GlcNAc...) asparagine; by host glycosylation is present at asparagine 498. A coiled-coil region spans residues 511 to 541 (LKLEARLNALEEVVLELGQDVANLKTRMSTR). Asparagine 557 carries N-linked (GlcNAc...) asparagine; by host glycosylation. A helical membrane pass occupies residues 625–645 (FIFIGVGALLLVIVLMIFPIV). At 646 to 688 (FQCLAKSLDQVQSDLNVLLLKKKKGGNAAPAAEMVELPRVSYT) the chain is on the cytoplasmic side.

As to quaternary structure, the mature envelope protein (Env) consists of a trimer of SU-TM heterodimers attached by noncovalent interactions or by a labile interchain disulfide bond. Post-translationally, specific enzymatic cleavages in vivo yield mature proteins. Envelope glycoproteins are synthesized as an inactive precursor that is N-glycosylated and processed likely by host cell furin or by a furin-like protease in the Golgi to yield the mature SU and TM proteins. The cleavage site between SU and TM requires the minimal sequence [KR]-X-[KR]-R.

It localises to the virion membrane. The protein localises to the host cell membrane. Its function is as follows. The surface protein (SU) attaches the virus to the host cell by binding to its receptor. This interaction triggers the refolding of the transmembrane protein (TM) and is thought to activate its fusogenic potential by unmasking its fusion peptide. Fusion occurs at the host cell plasma membrane. In terms of biological role, the transmembrane protein (TM) acts as a class I viral fusion protein. Under the current model, the protein has at least 3 conformational states: pre-fusion native state, pre-hairpin intermediate state, and post-fusion hairpin state. During viral and target cell membrane fusion, the coiled coil regions (heptad repeats) assume a trimer-of-hairpins structure, positioning the fusion peptide in close proximity to the C-terminal region of the ectodomain. The formation of this structure appears to drive apposition and subsequent fusion of viral and target cell membranes. Membranes fusion leads to delivery of the nucleocapsid into the cytoplasm. This Mus musculus (Mouse) protein is Envelope glycoprotein gp70 (env).